An 83-amino-acid chain; its full sequence is Cobrotoxin (83 aa).

The signal sequence occupies residues 1–21; it reads MKTLLLTLLVVTIVCLDLGYT. 4 cysteine pairs are disulfide-bonded: C24-C45, C38-C62, C64-C75, and C76-C81.

The protein belongs to the three-finger toxin family. Short-chain subfamily. Type I alpha-neurotoxin sub-subfamily. As to expression, expressed by the venom gland.

It localises to the secreted. In terms of biological role, binds to muscle nicotinic acetylcholine receptor (nAChR) and inhibit acetylcholine from binding to the receptor, thereby impairing neuromuscular transmission. Has a higher toxicity than cobrotoxin-b. In vivo, when tested on rat arthritis models, shows anti-inflammation and immunosuppression effects. The polypeptide is Cobrotoxin (Naja atra (Chinese cobra)).